A 574-amino-acid chain; its full sequence is Optineurin (574 aa).

Residues 1 to 33 (MSHQPLSCLTEKGDSPTETTGNGPPTLAHPNLD) are disordered. The stretch at 38–170 (HELLQQMREL…VSELQLKLNS (133 aa)) forms a coiled coil. Residues 58-209 (MKLNNQAMKG…GPIRTDSIDT (152 aa)) form an interaction with Rab8 region. The short motif at 176 to 181 (DSFVEI) is the LIR element. The residue at position 177 (Ser-177) is a Phosphoserine; by TBK1. At Ser-198 the chain carries Phosphoserine. Residues 233-496 (CLREGNQKVE…ALQLAVLLKD (264 aa)) are a coiled coil. The span at 262–286 (AKDRSETETQTEEHKEQEKEEEKSP) shows a compositional bias: basic and acidic residues. Residues 262 to 292 (AKDRSETETQTEEHKEQEKEEEKSPETVGSE) form a disordered region. Ser-336 is subject to Phosphoserine. Positions 405–574 (KRRESEKVDK…LLIHVTDCII (170 aa)) are interaction with HD. Residues 406 to 515 (RRESEKVDKV…RQSLMEMQSR (110 aa)) form an interaction with MYO6 region. A UBAN motif is present at residues 468–473 (DFHAER). Position 521 is a phosphoserine (Ser-521). The CCHC NOA-type zinc-finger motif lies at 544–574 (QQNIPIHSCPKCGEVLPDIDTLLIHVTDCII). Zn(2+)-binding residues include Cys-552, Cys-555, His-568, and Cys-572.

Self-associates. Interacts with HD. Interacts with GTF3A. Interacts with MYO6. Interacts (via UBAN) with ubiquitinated TFRC. Interacts with GTP-bound Rab8 (RAB8A and/or RAB8B). Interacts with TBC1D17. Interacts with TBK1. Interacts with TRAF3. Binds to linear ubiquitin chains. Interacts with LC3 family members MAP1LC3A, MAP1LC3B, GABARAP, GABARAPL1 and GABARAPL2; OPTN phosphorylation increases the association (at least with MAP1LC3B). Interacts with RAB12; the interaction may be indirect. Interacts with TBK1; this interaction leads to the Golgi localization of TBK1 and its subsequent activation. Interacts with palmitoyltransferase ZDHHC17/HIP14; the interaction does not lead to palmitoylation of OPTN. Interacts with CYLD. Interacts with TOM1; the interaction is indirect and is mediated by MYO6, which acts as a bridge between TOM1 and OPTN. Interacts with USP12; the interaction is independent of USP12 deubiquitinase activity and may be involved in regulation of autophagic flux. Phosphorylated by TBK1, leading to restrict bacterial proliferation in case of infection. In terms of tissue distribution, present in aqueous humor of the eye (at protein level). Expressed in trabecular meshwork and astrocytes.

It localises to the cytoplasm. It is found in the perinuclear region. Its subcellular location is the golgi apparatus. The protein resides in the trans-Golgi network. The protein localises to the cytoplasmic vesicle. It localises to the autophagosome. It is found in the recycling endosome. Functionally, plays an important role in the maintenance of the Golgi complex, in membrane trafficking, in exocytosis, through its interaction with myosin VI and Rab8. Links myosin VI to the Golgi complex and plays an important role in Golgi ribbon formation. Negatively regulates the induction of IFNB in response to RNA virus infection. Plays a neuroprotective role in the eye and optic nerve. Probably part of the TNF-alpha signaling pathway that can shift the equilibrium toward induction of cell death. May act by regulating membrane trafficking and cellular morphogenesis via a complex that contains Rab8 and huntingtin (HD). Mediates the interaction of Rab8 with the probable GTPase-activating protein TBC1D17 during Rab8-mediated endocytic trafficking, such as that of transferrin receptor (TFRC/TfR); regulates Rab8 recruitment to tubules emanating from the endocytic recycling compartment. Autophagy receptor that interacts directly with both the cargo to become degraded and an autophagy modifier of the MAP1 LC3 family; targets ubiquitin-coated bacteria (xenophagy) and appears to function in the same pathway as SQSTM1 and CALCOCO2/NDP52. The sequence is that of Optineurin (OPTN) from Sus scrofa (Pig).